The primary structure comprises 579 residues: V-type ATP synthase alpha chain (579 aa).

An ATP-binding site is contributed by 227 to 234 (GGFGTGKT).

It belongs to the ATPase alpha/beta chains family.

The enzyme catalyses ATP + H2O + 4 H(+)(in) = ADP + phosphate + 5 H(+)(out). Functionally, produces ATP from ADP in the presence of a proton gradient across the membrane. The V-type alpha chain is a catalytic subunit. In Anaeromyxobacter sp. (strain K), this protein is V-type ATP synthase alpha chain.